The following is a 194-amino-acid chain: Large ribosomal subunit protein bL9 (194 aa).

Belongs to the bacterial ribosomal protein bL9 family.

Binds to the 23S rRNA. In Paracoccus denitrificans (strain Pd 1222), this protein is Large ribosomal subunit protein bL9.